Here is a 130-residue protein sequence, read N- to C-terminus: Large ribosomal subunit protein uL14 (130 aa).

The protein belongs to the universal ribosomal protein uL14 family. Part of the 50S ribosomal subunit. Forms a cluster with proteins L3 and L19. In the 70S ribosome, L14 and L19 interact and together make contacts with the 16S rRNA in bridges B5 and B8.

Its function is as follows. Binds to 23S rRNA. Forms part of two intersubunit bridges in the 70S ribosome. The chain is Large ribosomal subunit protein uL14 from Leptospira biflexa serovar Patoc (strain Patoc 1 / Ames).